A 418-amino-acid polypeptide reads, in one-letter code: E3 ubiquitin-protein ligase pellino homolog 1 (418 aa).

The region spanning 13-200 (APVKYGELIV…MHPRNGFTED (188 aa)) is the FHA; atypical domain. Ser121 is modified (phosphoserine). Thr127 carries the phosphothreonine modification. A ring-like domain; necessary for ubiquitination of RIPK3 region spans residues 311–399 (CGHVHGYHNW…TFHAACPFCA (89 aa)).

Belongs to the pellino family. In terms of assembly, interacts with MAP3K7. Upon IL1B treatment, forms a complex with TRAF6, IRAK1, IRAK4 and MYD88; this complex recruits MAP3K7/TAK1, TAB1 and TAB2 to mediate NF-kappa-B activation. Direct binding of SMAD6 to PELI1 prevents the complex formation and hence negatively regulates IL1R-TLR signaling and eventually NF-kappa-B-mediated gene expression. Interacts (via atypical FHA domain) with RIPK3. Binds preferentially to the 'Thr-182' phosphorylated form of RIPK3. Interacts with RIPK1. Phosphorylation by IRAK1 and IRAK4 enhances its E3 ligase activity. Phosphorylated by ATM in response to DNA damage, promoting localization to DNA double-strand breaks (DSBs) and ability to mediate 'Lys-63'-linked ubiquitination of NBN. In terms of processing, sumoylated.

The protein resides in the chromosome. It catalyses the reaction S-ubiquitinyl-[E2 ubiquitin-conjugating enzyme]-L-cysteine + [acceptor protein]-L-lysine = [E2 ubiquitin-conjugating enzyme]-L-cysteine + N(6)-ubiquitinyl-[acceptor protein]-L-lysine.. The protein operates within protein modification; protein ubiquitination. E3 ubiquitin ligase catalyzing the covalent attachment of ubiquitin moieties onto substrate proteins. Involved in the TLR and IL-1 signaling pathways via interaction with the complex containing IRAK kinases and TRAF6. Acts as a positive regulator of inflammatory response in microglia through activation of NF-kappa-B and MAP kinase. Mediates 'Lys-63'-linked polyubiquitination of IRAK1 allowing subsequent NF-kappa-B activation. Conjugates 'Lys-63'-linked ubiquitin chains to the adapter protein ASC/PYCARD, which in turn is crucial for NLRP3 inflammasome activation. Mediates 'Lys-48'-linked polyubiquitination of RIPK3 leading to its subsequent proteasome-dependent degradation; preferentially recognizes and mediates the degradation of the 'Thr-182' phosphorylated form of RIPK3. Negatively regulates necroptosis by reducing RIPK3 expression. Mediates 'Lys-63'-linked ubiquitination of RIPK1. Following phosphorylation by ATM, catalyzes 'Lys-63'-linked ubiquitination of NBN, promoting DNA repair via homologous recombination. Negatively regulates activation of the metabolic mTORC1 signaling pathway by mediating 'Lys-63'-linked ubiquitination of mTORC1-inhibitory protein TSC1 and thereby promoting TSC1/TSC2 complex stability. The sequence is that of E3 ubiquitin-protein ligase pellino homolog 1 (Peli1) from Mus musculus (Mouse).